Consider the following 190-residue polypeptide: Histone H5 (190 aa).

The disordered stretch occupies residues 1-29 (MTESLVLSPAPAKPKRVKASRRSASHPTY). The span at 13–24 (KPKRVKASRRSA) shows a compositional bias: basic residues. Phosphoserine is present on residues Ser23, Ser30, Ser146, and Ser167. The 74-residue stretch at 25–98 (SHPTYSEMIA…GASGSFRLAK (74 aa)) folds into the H15 domain. Residues 87–190 (GVGASGSFRL…SGARKSPKKK (104 aa)) form a disordered region. Residues 104–190 (RSPGKKKKAV…SGARKSPKKK (87 aa)) are compositionally biased toward basic residues.

Belongs to the histone H1/H5 family. As to expression, erythroid cells.

It is found in the nucleus. The protein localises to the chromosome. Its function is as follows. Histone H5 performs the same function as H1, being necessary for the condensation of nucleosome chains into higher order structures, and replaces histone H1 in certain cells. This chain is Histone H5, found in Gallus gallus (Chicken).